A 444-amino-acid chain; its full sequence is Methylenetetrahydrofolate--tRNA-(uracil-5-)-methyltransferase TrmFO (444 aa).

10–15 (GAGLAG) serves as a coordination point for FAD.

It belongs to the MnmG family. TrmFO subfamily. The cofactor is FAD.

It localises to the cytoplasm. The enzyme catalyses uridine(54) in tRNA + (6R)-5,10-methylene-5,6,7,8-tetrahydrofolate + NADH + H(+) = 5-methyluridine(54) in tRNA + (6S)-5,6,7,8-tetrahydrofolate + NAD(+). The catalysed reaction is uridine(54) in tRNA + (6R)-5,10-methylene-5,6,7,8-tetrahydrofolate + NADPH + H(+) = 5-methyluridine(54) in tRNA + (6S)-5,6,7,8-tetrahydrofolate + NADP(+). Its function is as follows. Catalyzes the folate-dependent formation of 5-methyl-uridine at position 54 (M-5-U54) in all tRNAs. This Streptococcus pneumoniae serotype 2 (strain D39 / NCTC 7466) protein is Methylenetetrahydrofolate--tRNA-(uracil-5-)-methyltransferase TrmFO.